The following is a 313-amino-acid chain: Protein-methionine-sulfoxide reductase catalytic subunit MsrP (313 aa).

A signal peptide (tat-type signal) is located at residues 1–45 (MPAYRPPHIASSEITPKSFYLSRRNFLGTAAGLAAIGLAGREAIA). Mo-molybdopterin contacts are provided by residues Asn-71, 74 to 75 (YE), Cys-128, Thr-163, Asn-213, Arg-218, and 229 to 231 (GIK).

This sequence belongs to the MsrP family. As to quaternary structure, heterodimer of a catalytic subunit (MsrP) and a heme-binding subunit (MsrQ). Mo-molybdopterin serves as cofactor. Post-translationally, predicted to be exported by the Tat system. The position of the signal peptide cleavage has not been experimentally proven.

It is found in the periplasm. The catalysed reaction is L-methionyl-[protein] + a quinone + H2O = L-methionyl-(S)-S-oxide-[protein] + a quinol. It carries out the reaction L-methionyl-[protein] + a quinone + H2O = L-methionyl-(R)-S-oxide-[protein] + a quinol. Its function is as follows. Part of the MsrPQ system that repairs oxidized periplasmic proteins containing methionine sulfoxide residues (Met-O), using respiratory chain electrons. Thus protects these proteins from oxidative-stress damage caused by reactive species of oxygen and chlorine generated by the host defense mechanisms. MsrPQ is essential for the maintenance of envelope integrity under bleach stress, rescuing a wide series of structurally unrelated periplasmic proteins from methionine oxidation. The catalytic subunit MsrP is non-stereospecific, being able to reduce both (R-) and (S-) diastereoisomers of methionine sulfoxide. The polypeptide is Protein-methionine-sulfoxide reductase catalytic subunit MsrP (Agrobacterium fabrum (strain C58 / ATCC 33970) (Agrobacterium tumefaciens (strain C58))).